The chain runs to 287 residues: HTH-type transcriptional regulator MurR (287 aa).

The HTH rpiR-type domain maps to 1-77; it reads MLYLAKMRNA…MALIEEYSVN (77 aa). Positions 37-56 form a DNA-binding region, H-T-H motif; that stretch reads SRNLAKQLEVSQSSIVKFAQ. In terms of domain architecture, SIS spans 128–268; sequence VINLISKARL…FVGMVQLNDV (141 aa).

As to quaternary structure, homotetramer.

The protein operates within amino-sugar metabolism; N-acetylmuramate degradation [regulation]. Represses the expression of the murPQ operon involved in the uptake and degradation of N-acetylmuramic acid (MurNAc). Binds to two adjacent inverted repeats within the operator region. MurNAc 6-phosphate, the substrate of MurQ, is the specific inducer that weakens binding of MurR to the operator. This chain is HTH-type transcriptional regulator MurR, found in Citrobacter koseri (strain ATCC BAA-895 / CDC 4225-83 / SGSC4696).